Here is a 62-residue protein sequence, read N- to C-terminus: UPF0434 protein ASA_1553 (62 aa).

Belongs to the UPF0434 family.

In Aeromonas salmonicida (strain A449), this protein is UPF0434 protein ASA_1553.